The primary structure comprises 308 residues: Olfactory receptor 2T7 (308 aa).

Residues 1 to 17 lie on the Extracellular side of the membrane; the sequence is MPTLSFWVCSATPVSPG. The chain crosses the membrane as a helical span at residues 18–40; the sequence is FFALILLVFVTSIASNVVKIILI. The Cytoplasmic portion of the chain corresponds to 41-51; it reads HIDSRLHTPMY. The helical transmembrane segment at 52–74 threads the bilayer; the sequence is FLLSQLSLRDILYISTIVPKMLV. Topologically, residues 75–88 are extracellular; that stretch reads DQVMSQRAISFAGC. An intrachain disulfide couples C88 to C170. Residues 89-109 traverse the membrane as a helical segment; that stretch reads TAQHFLYLTLAGAEFFLLGLM. The Cytoplasmic portion of the chain corresponds to 110-130; sequence SCDRYVAICNPLHYPDLMSRK. A helical transmembrane segment spans residues 131-151; it reads ICWLIVAAAWLGGSIDGFLLT. The Extracellular portion of the chain corresponds to 152–188; that stretch reads PVTMQFPFCASREINHFFCEVPALLKLSCTDTSAYET. Residues 189–209 traverse the membrane as a helical segment; sequence AMYVCCIMMLLIPFSVISGSY. The Cytoplasmic segment spans residues 210–235; sequence TRILITVYRMSEAEGRRKAVATCSSH. A helical membrane pass occupies residues 236 to 256; that stretch reads MVVVSLFYGAAMYTYVLPHSY. Over 257–262 the chain is Extracellular; the sequence is HTPEQD. A helical transmembrane segment spans residues 263 to 283; sequence KAVSAFYTILTPMLNPLIYSL. Over 284–308 the chain is Cytoplasmic; it reads RNKDVTGALQKVVGRCVSSGKVTTF.

This sequence belongs to the G-protein coupled receptor 1 family.

It localises to the cell membrane. In terms of biological role, odorant receptor. The protein is Olfactory receptor 2T7 (OR2T7) of Homo sapiens (Human).